A 491-amino-acid chain; its full sequence is F-box/LRR-repeat protein 7 (491 aa).

The interval 1–79 (MGANNGKQYG…GRGSSTSSSS (79 aa)) is disordered. The span at 16-26 (SSSVSSDVSSS) shows a compositional bias: low complexity. Residues 27–55 (TDHTPTKAQRNVATSEDSDLSMRTLSTPS) show a composition bias toward polar residues. The F-box domain maps to 111–157 (QASIDRLPDHSMVQIFSFLPTNQLCRCARVCRRWYNLAWDPRLWRTI). 10 LRR repeats span residues 185-210 (CLMLETVIVSGCRRLTDRGLYTIAQC), 211-236 (CPELRRLEVSGCYNISNEAVFDVVSL), 237-262 (CPNLEHLDVSGCSKVTCISLTREASI), 271-296 (QISIRYLDMTDCFVLEDEGLHTIAAH), 297-322 (CTQLTHLYLRRCVRLTDEGLRYLVIY), 323-348 (CTSIKELSVSDCRFVSDFGLREIAKL), 349-374 (ESRLRYLSIAHCGRITDVGIRYVAKY), 375-400 (CSKLRYLNARGCEGITDHGVEYLAKN), 401-426 (CTKLKSLDIGKCPLVSDTGLESLALN), and 427-452 (CFNLKRLSLKSCESITGQGLQIVAAN).

Belongs to the FBXL7 family. As to quaternary structure, part of the SCF (SKP1-CUL1-F-box) E3 ubiquitin-protein ligase complex SCF(FBXL7) composed of CUL1, SKP1, RBX1 and FBXL7. Interacts with AURKA; interaction takes place during mitosis but not in interphase. Interacts with BIRC5; this interaction allows BIRC5 to be polyubiquitinated by the SCF(FBXL7) E3 ubiquitin-protein ligase complex.

It is found in the cytoplasm. The protein localises to the cytoskeleton. The protein resides in the microtubule organizing center. It localises to the centrosome. The protein operates within protein modification; protein ubiquitination. Its function is as follows. Substrate recognition component of a SCF (SKP1-CUL1-F-box protein) E3 ubiquitin-protein ligase complex. During mitosis, it mediates the ubiquitination and subsequent proteasomal degradation of AURKA, causing mitotic arrest. It also regulates mitochondrial function by mediating the ubiquitination and proteasomal degradation of the apoptosis inhibitor BIRC5. In Mus musculus (Mouse), this protein is F-box/LRR-repeat protein 7 (Fbxl7).